Consider the following 35-residue polypeptide: Photosystem II reaction center protein M (35 aa).

A helical transmembrane segment spans residues isoleucine 5–isoleucine 25.

Belongs to the PsbM family. As to quaternary structure, PSII is composed of 1 copy each of membrane proteins PsbA, PsbB, PsbC, PsbD, PsbE, PsbF, PsbH, PsbI, PsbJ, PsbK, PsbL, PsbM, PsbT, PsbX, PsbY, PsbZ, Psb30/Ycf12, at least 3 peripheral proteins of the oxygen-evolving complex and a large number of cofactors. It forms dimeric complexes.

The protein resides in the plastid. The protein localises to the chloroplast thylakoid membrane. One of the components of the core complex of photosystem II (PSII). PSII is a light-driven water:plastoquinone oxidoreductase that uses light energy to abstract electrons from H(2)O, generating O(2) and a proton gradient subsequently used for ATP formation. It consists of a core antenna complex that captures photons, and an electron transfer chain that converts photonic excitation into a charge separation. This subunit is found at the monomer-monomer interface. This is Photosystem II reaction center protein M from Amborella trichopoda.